The chain runs to 746 residues: Exostosin-1 (746 aa).

The Cytoplasmic segment spans residues 1 to 7 (MQAKKRY). The helical; Signal-anchor for type II membrane protein transmembrane segment at 8 to 28 (FILLSAGSCLALLFYFGGLQF) threads the bilayer. Residues 29 to 746 (RASRSHSRRE…RKKYRDIERL (718 aa)) are Lumenal-facing. An N-linked (GlcNAc...) asparagine glycan is attached at N89. 2 disulfides stabilise this stretch: C98–C103 and C109–C152. A protein is bound by residues L166 and Y203. UDP contacts are provided by K267, K269, Y271, and R280. C298 and C312 are oxidised to a cystine. H300 contacts a protein. UDP contacts are provided by Y319 and Y324. N330 carries an N-linked (GlcNAc...) asparagine glycan. 2 disulfides stabilise this stretch: C334–C355 and C652–C704. R346 and E349 together coordinate UDP.

The protein belongs to the glycosyltransferase 47 family. As to quaternary structure, part of the heparan sulfate polymerase, a dimeric complex composed of EXT1 and EXT2. Could also form homooligomeric complexes. Interacts with NDST1. Post-translationally, N-glycosylated.

The protein localises to the golgi apparatus membrane. It is found in the golgi apparatus. Its subcellular location is the cis-Golgi network membrane. The protein resides in the endoplasmic reticulum membrane. The enzyme catalyses 3-O-{alpha-D-GlcNAc-[(1-&gt;4)-beta-D-GlcA-(1-&gt;4)-alpha-D-GlcNAc](n)-(1-&gt;4)-beta-D-GlcA-(1-&gt;3)-beta-D-Gal-(1-&gt;3)-beta-D-Gal-(1-&gt;4)-beta-D-Xyl}-L-seryl-[protein] + UDP-alpha-D-glucuronate = 3-O-{[(1-&gt;4)-beta-D-GlcA-(1-&gt;4)-alpha-D-GlcNAc](n+1)-(1-&gt;4)-beta-D-GlcA-(1-&gt;3)-beta-D-Gal-(1-&gt;3)-beta-D-Gal-(1-&gt;4)-beta-D-Xyl}-L-seryl-[protein] + UDP + H(+). It participates in protein modification; protein glycosylation. In terms of biological role, glycosyltransferase forming with EXT2 the heterodimeric heparan sulfate polymerase which catalyzes the elongation of the heparan sulfate glycan backbone. Glycan backbone extension consists in the alternating transfer of (1-&gt;4)-beta-D-GlcA and (1-&gt;4)-alpha-D-GlcNAc residues from their respective UDP-sugar donors. Both EXT1 and EXT2 are required for the full activity of the polymerase since EXT1 bears the N-acetylglucosaminyl-proteoglycan 4-beta-glucuronosyltransferase activity within the complex while EXT2 carries the glucuronosyl-N-acetylglucosaminyl-proteoglycan 4-alpha-N-acetylglucosaminyltransferase activity. Heparan sulfate proteoglycans are ubiquitous components of the extracellular matrix and play an important role in tissue homeostasis and signaling. In Pongo abelii (Sumatran orangutan), this protein is Exostosin-1 (EXT1).